A 288-amino-acid chain; its full sequence is Diaminopimelate epimerase (288 aa).

The substrate site is built by asparagine 17, glutamine 47, and asparagine 67. Residue cysteine 76 is the Proton donor of the active site. Residues 77-78 (GN), asparagine 163, asparagine 196, and 214-215 (ER) contribute to the substrate site. The active-site Proton acceptor is the cysteine 223. 224 to 225 (GS) is a binding site for substrate.

This sequence belongs to the diaminopimelate epimerase family. Homodimer.

The protein resides in the cytoplasm. It catalyses the reaction (2S,6S)-2,6-diaminopimelate = meso-2,6-diaminopimelate. The protein operates within amino-acid biosynthesis; L-lysine biosynthesis via DAP pathway; DL-2,6-diaminopimelate from LL-2,6-diaminopimelate: step 1/1. Functionally, catalyzes the stereoinversion of LL-2,6-diaminopimelate (L,L-DAP) to meso-diaminopimelate (meso-DAP), a precursor of L-lysine and an essential component of the bacterial peptidoglycan. This chain is Diaminopimelate epimerase, found in Rhodopseudomonas palustris (strain BisB18).